Consider the following 222-residue polypeptide: 7-cyano-7-deazaguanine synthase (222 aa).

Residue 11–21 (FSGGQDSTTCL) participates in ATP binding. Zn(2+) is bound by residues cysteine 187, cysteine 195, cysteine 198, and cysteine 201.

Belongs to the QueC family. Requires Zn(2+) as cofactor.

The catalysed reaction is 7-carboxy-7-deazaguanine + NH4(+) + ATP = 7-cyano-7-deazaguanine + ADP + phosphate + H2O + H(+). It participates in purine metabolism; 7-cyano-7-deazaguanine biosynthesis. In terms of biological role, catalyzes the ATP-dependent conversion of 7-carboxy-7-deazaguanine (CDG) to 7-cyano-7-deazaguanine (preQ(0)). The chain is 7-cyano-7-deazaguanine synthase from Actinobacillus pleuropneumoniae serotype 3 (strain JL03).